A 254-amino-acid polypeptide reads, in one-letter code: Pimeloyl-[acyl-carrier protein] methyl ester esterase (254 aa).

Positions 16 to 241 (LVLLHGWGMN…QSSHAPFMTE (226 aa)) constitute an AB hydrolase-1 domain. Substrate-binding positions include Trp22, 82 to 83 (SL), and 143 to 147 (FMALQ). The active-site Nucleophile is Ser82. Active-site residues include Asp207 and His235. A substrate-binding site is contributed by His235.

Belongs to the AB hydrolase superfamily. Carboxylesterase BioH family. As to quaternary structure, monomer.

It is found in the cytoplasm. The enzyme catalyses 6-carboxyhexanoyl-[ACP] methyl ester + H2O = 6-carboxyhexanoyl-[ACP] + methanol + H(+). Its pathway is cofactor biosynthesis; biotin biosynthesis. Its function is as follows. The physiological role of BioH is to remove the methyl group introduced by BioC when the pimeloyl moiety is complete. It allows to synthesize pimeloyl-ACP via the fatty acid synthetic pathway through the hydrolysis of the ester bonds of pimeloyl-ACP esters. This Vibrio campbellii (strain ATCC BAA-1116) protein is Pimeloyl-[acyl-carrier protein] methyl ester esterase.